The sequence spans 268 residues: Pantothenate synthetase (268 aa).

Residue 18–25 coordinates ATP; the sequence is MGYLHEGH. His25 acts as the Proton donor in catalysis. Gln49 is a binding site for (R)-pantoate. Gln49 is a binding site for beta-alanine. Residue 135–138 coordinates ATP; sequence GQKD. A (R)-pantoate-binding site is contributed by Gln141. ATP-binding positions include Val164 and 172–175; that span reads LSSR.

It belongs to the pantothenate synthetase family. As to quaternary structure, homodimer.

The protein localises to the cytoplasm. The catalysed reaction is (R)-pantoate + beta-alanine + ATP = (R)-pantothenate + AMP + diphosphate + H(+). It functions in the pathway cofactor biosynthesis; (R)-pantothenate biosynthesis; (R)-pantothenate from (R)-pantoate and beta-alanine: step 1/1. Catalyzes the condensation of pantoate with beta-alanine in an ATP-dependent reaction via a pantoyl-adenylate intermediate. In Dehalococcoides mccartyi (strain ATCC BAA-2266 / KCTC 15142 / 195) (Dehalococcoides ethenogenes (strain 195)), this protein is Pantothenate synthetase.